The following is a 215-amino-acid chain: Probable ribosome-binding factor A, chloroplastic (215 aa).

The transit peptide at 1–52 (MPNLLHTNQSHFFFLHHPPIYTVSSKTQAFHFPQSMAPVNLRTNLSVRRTVR) directs the protein to the chloroplast. Basic and acidic residues predominate over residues 183–192 (KGSGEGKTEP). The disordered stretch occupies residues 183–210 (KGSGEGKTEPSDSTEDDQDWEVDDPDED). Residues 194–210 (DSTEDDQDWEVDDPDED) are compositionally biased toward acidic residues.

The protein belongs to the RbfA family.

Its subcellular location is the plastid. It localises to the chloroplast. The protein is Probable ribosome-binding factor A, chloroplastic of Arabidopsis thaliana (Mouse-ear cress).